Reading from the N-terminus, the 476-residue chain is Surface membrane glycoprotein GP46/M-2 (476 aa).

The first 32 residues, 1–32, serve as a signal peptide directing secretion; that stretch reads MAQCVRRLVLAAPLAAVVALLLCTSSAPVARA. 4 consecutive repeat copies span residues 107–130, 131–154, 155–178, and 179–202. The 4 X 24 AA tandem repeats stretch occupies residues 107–202; the sequence is VMILALDFGA…FCGCVPDSWR (96 aa). 2 disordered regions span residues 231–255 and 348–370; these read APGT…PSPG and ALSP…RRRA. Cysteine 452 carries GPI-anchor amidated cysteine lipidation. Positions 453 to 476 are cleaved as a propeptide — removed in mature form; that stretch reads PALFDGARLRCCALVVCAGAAPAG.

It localises to the cell membrane. The chain is Surface membrane glycoprotein GP46/M-2 from Leishmania amazonensis.